A 436-amino-acid chain; its full sequence is Gamma-glutamyl phosphate reductase (436 aa).

Belongs to the gamma-glutamyl phosphate reductase family.

Its subcellular location is the cytoplasm. The enzyme catalyses L-glutamate 5-semialdehyde + phosphate + NADP(+) = L-glutamyl 5-phosphate + NADPH + H(+). It participates in amino-acid biosynthesis; L-proline biosynthesis; L-glutamate 5-semialdehyde from L-glutamate: step 2/2. Catalyzes the NADPH-dependent reduction of L-glutamate 5-phosphate into L-glutamate 5-semialdehyde and phosphate. The product spontaneously undergoes cyclization to form 1-pyrroline-5-carboxylate. This Prochlorococcus marinus (strain MIT 9312) protein is Gamma-glutamyl phosphate reductase.